The primary structure comprises 333 residues: Probable siderophore transport system permease protein YfiZ (333 aa).

Residues 1 to 31 form the signal peptide; that stretch reads MICKKASSKWIVLVCLIFILLTAVCASVVYG. Helical transmembrane passes span 64–84, 94–114, 119–139, 152–172, 193–213, 246–266, 280–300, and 303–323; these read ALVA…MQAL, IFGI…FLHI, ALVW…YAAG, TLAG…LLSV, LDLL…CFFL, VMLA…GIII, WVLP…DIGA, and IIMP…MPVF.

It belongs to the binding-protein-dependent transport system permease family. FecCD subfamily. In terms of assembly, the complex is composed of one ATP-binding protein (YusV), two transmembrane proteins (YfiZ and YfhA) and a solute-binding protein (YfiY).

The protein resides in the cell membrane. Part of the ABC transporter complex YfiYZ/YfhA/YusV involved in import of the iron-hydroxamate siderophores schizokinen, arthrobactin and corprogen. This chain is Probable siderophore transport system permease protein YfiZ (yfiZ), found in Bacillus subtilis (strain 168).